The following is an 833-amino-acid chain: Ribosome biogenesis protein BOP1 homolog (833 aa).

Residues 20–202 (NKKSEPIAVS…DSDDSSEDES (183 aa)) form a disordered region. Over residues 36–56 (SKPTTTATTTVSKSPVSTITT) the composition is skewed to low complexity. Composition is skewed to acidic residues over residues 90 to 111 (SEDDEDYESEEDDEGDDEEDVE) and 136 to 150 (EAEESLVEYQSEDDS). Over residues 154-170 (SSKSSSSTTTTTTTTKK) the composition is skewed to low complexity. Residues 182–192 (KQWTNDPNQFY) show a composition bias toward polar residues. Positions 193–202 (DSDDSSEDES) are enriched in acidic residues. WD repeat units lie at residues 331 to 370 (TKAIRMGWIKLNKKGKKGEKDKKDGNFDLWADEGEEKEKT), 488 to 527 (GHKARVRSISISPNGQWLASGSDDCTIKIWEVSSTRCLYS), and 529 to 569 (EVES…TQTE). The interval 568–592 (TEHSPETEKILTKPPTDSSTEQQQN) is disordered. A compositionally biased stretch (polar residues) spans 582–592 (PTDSSTEQQQN). WD repeat units lie at residues 618 to 660 (HHPF…TQSP), 663 to 701 (KSKTPNQVTRFHPNKPIFFVADQNIIRVYDLMKQELIKK), 704 to 743 (TGCRYISSIDIHPQGDNVIMGGYDKKVCWFDLDLSVRPYK), 747 to 786 (YHKMAVRKVIYHPTLPLFASCSDDLSIHVFHGMVYDDLLQ), and 802 to 833 (INDLGVLDIVFHPKQPWIFSSGADSTIRLYTN).

The protein belongs to the WD repeat BOP1/ERB1 family.

It localises to the nucleus. The protein resides in the nucleolus. The protein localises to the nucleoplasm. Functionally, required for maturation of ribosomal RNAs and formation of the large ribosomal subunit. The sequence is that of Ribosome biogenesis protein BOP1 homolog from Dictyostelium discoideum (Social amoeba).